Consider the following 175-residue polypeptide: Peptidyl-prolyl cis-trans isomerase B (175 aa).

One can recognise a PPIase cyclophilin-type domain in the interval glutamate 3–valine 172.

The protein belongs to the cyclophilin-type PPIase family.

It localises to the cytoplasm. The catalysed reaction is [protein]-peptidylproline (omega=180) = [protein]-peptidylproline (omega=0). Inhibited by cyclosporin A (CsA). Its function is as follows. PPIases accelerate the folding of proteins. It catalyzes the cis-trans isomerization of proline imidic peptide bonds in oligopeptides. This Streptomyces anulatus (Streptomyces chrysomallus) protein is Peptidyl-prolyl cis-trans isomerase B (cypB).